The following is an 869-amino-acid chain: NACHT, LRR and PYD domains-containing protein 6 (869 aa).

Residues 37–128 (KLRDAPLDGR…REHVLRQHAK (92 aa)) enclose the Pyrin domain. One can recognise an NACHT domain in the interval 194 to 511 (LTVVLQGPAG…EFLAALSYLL (318 aa)). Position 200–207 (200–207 (GPAGIGKT)) interacts with ATP. Residues 350–354 (KDKKK) are disordered. Residues 460-485 (EEDLEKLKLRGSQVQTIFLNKKEIPG) form an LRR 1 repeat. A disordered region spans residues 577–608 (VQGQSHPKGPPVGAKKTAELEDIEDAEEEEEE). Residues 596-608 (LEDIEDAEEEEEE) are compositionally biased toward acidic residues. LRR repeat units lie at residues 635–658 (LSSL…VLNY) and 837–860 (TLSL…KTSK).

Belongs to the NLRP family. Homomultimer; forms the NLRP6 inflammasome polymeric complex, a filament composed of homopolymers in response to pathogens and other damage-associated signals. The core of NLRP6 inflammasomes consists of a signal sensor component (NLRP6), an adapter (PYCARD/ASC), which recruits effector pro-inflammatory caspases (CASP1 and CASP4). Interacts (via pyrin domain) with PYCARD/ASC (via pyrin domain); interaction takes place following NLRP6 activation and formation of liquid-liquid phase separation (LLPS), initiating nucleation which greatly enhances further addition of soluble PYCARD/ASC molecules to the speck in a prion-like polymerization process. Clustered PYCARD/ASC nucleates the formation of CASP1 (or possibly CASP4) filaments through the interaction of their respective CARD domains, acting as a platform for CASP1 polymerization. CASP1 filament formation increases local enzyme concentration, resulting in trans-autocleavage and activation. Active CASP1 then processes IL1B and IL18 precursors, leading to the release of mature cytokines in the extracellular milieu and inflammatory response. Interacts with DHX15. Post-translationally, polyubiquitinated with 'Lys-63'-linked chains, promoting the interaction with PYCARD/ASC and formation of the NLRP6 inflammasome. Deubiquitination by CYLD decreases the interaction with PYCARD/ASC. Highly expressed in the gastrointestinal tract, predominantly in colonic myofibroblasts and in colonic epithelial and endothelial cells. Within the intestinal mucosa, highly expressed by goblet cells. Also expressed in hepatocytes and in immune cells, including CD4(+) and CD8(+) T-cells, dendritic cells, mastocytes and peritoneal macrophages, as well as in lung, kidney, bladder and gonads.

Its subcellular location is the cytoplasm. The protein localises to the inflammasome. The protein resides in the cell membrane. It is found in the nucleus membrane. Acts as the sensor component of the NLRP6 inflammasome, which mediates inflammasome activation in response to various pathogen-associated signals, leading to maturation and secretion of IL1B and IL18. Inflammasomes are supramolecular complexes that assemble in the cytosol in response to pathogens and other damage-associated signals and play critical roles in innate immunity and inflammation. Acts as a recognition receptor (PRR): recognizes and binds specific pathogens and other damage-associated signals, such as lipoteichoic acid (LTA), a cell-wall component of Gram-positive bacteria, or double stranded RNA (dsRNA). May also recognize and bind lipopolysaccharide (LPS), a major component of the outer membrane of Gram-negative bacteria; however, LPS is probably not a major activator of the NLRP6 inflammasome. Following LTA- or dsRNA-binding, NLRP6 undergoes liquid-liquid phase separation (LLPS), enhancing multivalent interactions, an essential step for the formation of the NLRP6 inflammasome polymeric complex. The NLRP6 inflammasome acts by promoting recruitment of effector pro-inflammatory caspases (CASP1 and/or CASP4) that catalyze maturation and secretion of IL1B and IL18 in the extracellular milieu. The NLRP6 inflammasome plays a central role in the maintenance of epithelial integrity and host defense against microbial infections in the intestine. Required to restrict infection against Gram-positive bacteria by recognizing lipoteichoic acid (LTA), leading to recruitment of CASP4 and CASP1, and subsequent maturation and secretion of IL1B and IL18. Involved in intestinal antiviral innate immunity together with DHX15: recognizes and binds viral dsRNA to restrict infection by enteric viruses through the interferon pathway and GSDMD-dependent release of IL18. Required to prevent infection by the apicomplexan parasite C.tyzzeri in enterocytes by promoting GSDMD-dependent release of IL18. The NLRP6 inflammasome may also regulate the gut microbiota composition by acting as a sensor of microbiota-associated metabolites to form a PYCARD/ASC-dependent inflammasome for downstream IL18 release and secretion of antimicrobial peptides. Its role in the regulation of the gut microbiota composition is however subject to discussion. Essential for gut mucosal self-renewal and proliferation. Regulate mucus secretion in an inflammasome- and autophagy-dependent manner to prevent invasion by enteric bacteria. During systemic bacterial infections, the NLRP6 inflammasome negatively regulates neutrophil recruitment and neutrophil extracellular traps (NETs) formation. May promote peripheral nerve recovery following injury via an inflammasome-independent mechanism. In Mus musculus (Mouse), this protein is NACHT, LRR and PYD domains-containing protein 6.